Consider the following 177-residue polypeptide: Copper-binding regulatory protein cuf2 (177 aa).

The copper-fist DNA-binding region spans 1 to 40; the sequence is MIIIDGKNYACVVCLRGHRGSSCQHQERALIEVRTRGRPL. Zn(2+) contacts are provided by Cys-11, Cys-14, Cys-23, and His-25.

Its subcellular location is the nucleus. The chain is Copper-binding regulatory protein cuf2 (cuf2) from Schizosaccharomyces pombe (strain 972 / ATCC 24843) (Fission yeast).